The primary structure comprises 486 residues: Protein nucleotidyltransferase YdiU (486 aa).

ATP-binding residues include glycine 90, glycine 92, arginine 93, lysine 113, aspartate 125, glycine 126, arginine 176, and arginine 183. Aspartate 252 functions as the Proton acceptor in the catalytic mechanism. Asparagine 253 and aspartate 262 together coordinate Mg(2+). Aspartate 262 lines the ATP pocket.

Belongs to the SELO family. It depends on Mg(2+) as a cofactor. Mn(2+) is required as a cofactor.

The enzyme catalyses L-seryl-[protein] + ATP = 3-O-(5'-adenylyl)-L-seryl-[protein] + diphosphate. The catalysed reaction is L-threonyl-[protein] + ATP = 3-O-(5'-adenylyl)-L-threonyl-[protein] + diphosphate. It carries out the reaction L-tyrosyl-[protein] + ATP = O-(5'-adenylyl)-L-tyrosyl-[protein] + diphosphate. It catalyses the reaction L-histidyl-[protein] + UTP = N(tele)-(5'-uridylyl)-L-histidyl-[protein] + diphosphate. The enzyme catalyses L-seryl-[protein] + UTP = O-(5'-uridylyl)-L-seryl-[protein] + diphosphate. The catalysed reaction is L-tyrosyl-[protein] + UTP = O-(5'-uridylyl)-L-tyrosyl-[protein] + diphosphate. Nucleotidyltransferase involved in the post-translational modification of proteins. It can catalyze the addition of adenosine monophosphate (AMP) or uridine monophosphate (UMP) to a protein, resulting in modifications known as AMPylation and UMPylation. This is Protein nucleotidyltransferase YdiU from Pseudomonas aeruginosa (strain UCBPP-PA14).